The following is a 321-amino-acid chain: MKSLVAHFSTPLITARLVPRCIIHRASISAVSFSTVRRRFSPLTMASAAQSSSQAVSYGSGNSDTDVFKLIQAHEEKAARLSPVEEIRTVLNGSICGMLSTFSQKYEGYPSGSMVDFACDADGSPILAVSSLAVHTKDLLANPKCSLLIARDPEDRTGLRITLHGDAVLVSEKDQAAVRSAYLAKHPKAFWVDFGDFSFMRIEPKVVRYVSGVATAFLGSGEFSKEEYQAAKVDPIAQYAKPVTSHMNKDHEEDTKAIVHNITSIPVESALMLDLDSLGFNVKATLQGNTFKLRVPFPRRAQDRKDVKTLIVEMLQAAKSN.

The transit peptide at 1–45 directs the protein to the chloroplast; the sequence is MKSLVAHFSTPLITARLVPRCIIHRASISAVSFSTVRRRFSPLTM. The dimerization stretch occupies residues 96 to 116; it reads CGMLSTFSQKYEGYPSGSMVD. Positions 130, 134, and 135 each coordinate heme b. 2 dimerization regions span residues 144–166 and 205–208; these read KCSLLIARDPEDRTGLRITLHGD and KVVR.

As to quaternary structure, homodimer. Binds to heme in the interdimer interface; the heme iron is coordinated by a fixed water molecule.

It localises to the plastid. The protein localises to the chloroplast. Dimeric beta-barrel protein binding to heme and catalyzing its degradation to produce biliverdin. May function in the tetrapyrrole biosynthetic pathway. This is Non-canonical heme oxygenase HOZ, chloroplastic from Arabidopsis thaliana (Mouse-ear cress).